Reading from the N-terminus, the 274-residue chain is Dermonecrotic toxin LspiSicTox-betaIII1 G (274 aa).

The active site involves histidine 5. Mg(2+) is bound by residues glutamate 25 and aspartate 27. Histidine 41 acts as the Nucleophile in catalysis. Cystine bridges form between cysteine 45–cysteine 51 and cysteine 47–cysteine 189. Asparagine 66 carries an N-linked (GlcNAc...) asparagine glycan. Aspartate 85 contacts Mg(2+).

It belongs to the arthropod phospholipase D family. Class II subfamily. Mg(2+) serves as cofactor. As to expression, expressed by the venom gland.

It localises to the secreted. The enzyme catalyses an N-(acyl)-sphingosylphosphocholine = an N-(acyl)-sphingosyl-1,3-cyclic phosphate + choline. It carries out the reaction an N-(acyl)-sphingosylphosphoethanolamine = an N-(acyl)-sphingosyl-1,3-cyclic phosphate + ethanolamine. The catalysed reaction is a 1-acyl-sn-glycero-3-phosphocholine = a 1-acyl-sn-glycero-2,3-cyclic phosphate + choline. It catalyses the reaction a 1-acyl-sn-glycero-3-phosphoethanolamine = a 1-acyl-sn-glycero-2,3-cyclic phosphate + ethanolamine. Dermonecrotic toxins cleave the phosphodiester linkage between the phosphate and headgroup of certain phospholipids (sphingolipid and lysolipid substrates), forming an alcohol (often choline) and a cyclic phosphate. This toxin acts on sphingomyelin (SM). It may also act on ceramide phosphoethanolamine (CPE), lysophosphatidylcholine (LPC) and lysophosphatidylethanolamine (LPE), but not on lysophosphatidylserine (LPS), and lysophosphatidylglycerol (LPG). It acts by transphosphatidylation, releasing exclusively cyclic phosphate products as second products. Induces dermonecrosis, hemolysis, increased vascular permeability, edema, inflammatory response, and platelet aggregation. In Loxosceles spinulosa (Recluse spider), this protein is Dermonecrotic toxin LspiSicTox-betaIII1 G.